Reading from the N-terminus, the 234-residue chain is HTH-type transcriptional regulator MT1864 (234 aa).

Positions 15-75 constitute an HTH tetR-type domain; the sequence is EQIEAKIVEL…LLLVDAYSDL (61 aa). A DNA-binding region (H-T-H motif) is located at residues 38 to 57; the sequence is SLRAIARNLGMVSSAVYRYV.

As to quaternary structure, homodimer.

Its subcellular location is the cytoplasm. Its function is as follows. May participate in the regulatory network that controls the expression of MmpL lipid transporters. This Mycobacterium tuberculosis (strain CDC 1551 / Oshkosh) protein is HTH-type transcriptional regulator MT1864.